Here is a 912-residue protein sequence, read N- to C-terminus: Metabotropic glutamate receptor 4 (912 aa).

Residues 1-32 (MPGKSGLGWWWARLPLCLLLSLYGPWMPSSLG) form the signal peptide. Topologically, residues 33 to 586 (KPKGHPHMNS…PIIKLEWDSP (554 aa)) are extracellular. An intrachain disulfide couples Cys67 to Cys109. A glycan (N-linked (GlcNAc...) asparagine) is linked at Asn98. L-glutamate is bound by residues Ser159, 180–182 (AST), and Tyr230. Disulfide bonds link Cys249-Cys538, Cys372-Cys388, Cys428-Cys435, Cys520-Cys539, Cys524-Cys542, Cys545-Cys557, and Cys560-Cys573. Asn301 is a glycosylation site (N-linked (GlcNAc...) asparagine). Asp312 provides a ligand contact to L-glutamate. Lys405 provides a ligand contact to L-glutamate. Asn454 and Asn484 each carry an N-linked (GlcNAc...) asparagine glycan. Residue Asn569 is glycosylated (N-linked (GlcNAc...) asparagine). A helical transmembrane segment spans residues 587–607 (WAVLPLFLAVVGIAATLFVVI). At 608-624 (TFVRYNDTPIVKASGRE) the chain is on the cytoplasmic side. A helical transmembrane segment spans residues 625-645 (LSYVLLAGIFLCYATTFLMIA). At 646–653 (EPDLGTCS) the chain is on the extracellular side. A helical membrane pass occupies residues 654-671 (LRRIFLGLGMSISYAALL). The Cytoplasmic segment spans residues 672–699 (TKTNRIYRIFEQGKRSVSAPRFISPASQ). A helical membrane pass occupies residues 700–720 (LAITFSLISLQLLGICVWFVV). Over 721-751 (DPSHSVVDFQDQRTLDPRFARGVLKCDISDL) the chain is Extracellular. Residues 752-772 (SLICLLGYSMLLMVTCTVYAI) traverse the membrane as a helical segment. At 773–786 (KTRGVPETFNEAKP) the chain is on the cytoplasmic side. The helical transmembrane segment at 787 to 807 (IGFTMYTTCIVWLAFIPIFFG) threads the bilayer. Residues 808–826 (TSQSADKLYIQTTTLTVSV) lie on the Extracellular side of the membrane. Residues 827–847 (SLSASVSLGMLYMPKVYIILF) form a helical membrane-spanning segment. Residues 848 to 912 (HPEQNVPKRK…TYVTYTNHAI (65 aa)) lie on the Cytoplasmic side of the membrane.

It belongs to the G-protein coupled receptor 3 family. Interacts with PICK1.

The protein localises to the cell membrane. G-protein coupled receptor for glutamate. Ligand binding causes a conformation change that triggers signaling via guanine nucleotide-binding proteins (G proteins) and modulates the activity of down-stream effectors. Signaling inhibits adenylate cyclase activity. In Macaca fascicularis (Crab-eating macaque), this protein is Metabotropic glutamate receptor 4 (GRM4).